Consider the following 1013-residue polypeptide: GPI ethanolamine phosphate transferase 3 (1013 aa).

Residues 41 to 61 traverse the membrane as a helical segment; it reads TLYIFLYSALAALQFIAIAFF. 5 N-linked (GlcNAc...) asparagine glycosylation sites follow: asparagine 184, asparagine 205, asparagine 336, asparagine 399, and asparagine 423. The next 3 membrane-spanning stretches (helical) occupy residues 447 to 467, 484 to 504, and 515 to 535; these read YYSI…LITI, VPTI…VFYV, and LWAS…VPIF. The N-linked (GlcNAc...) asparagine glycan is linked to asparagine 539. The next 4 helical transmembrane spans lie at 558–578, 582–602, 643–663, and 682–702; these read VAAF…FTIW, IVSF…VFLP, IVGG…SLIT, and NYSF…PACI. A glycan (N-linked (GlcNAc...) asparagine) is linked at asparagine 707. Residues 715-735 form a helical membrane-spanning segment; that stretch reads AAPIWIGMLMKSILFVNFIYW. Asparagine 742, asparagine 750, and asparagine 755 each carry an N-linked (GlcNAc...) asparagine glycan. 7 helical membrane-spanning segments follow: residues 761–781, 802–822, 825–845, 868–888, 899–919, 943–963, and 977–997; these read IVVG…PLCI, NAYG…ILLF, PLAQ…LEIF, FFST…GFIL, LGIV…VALL, GMLL…VTNF, and FMFA…ITIA.

It belongs to the PIGG/PIGN/PIGO family. PIGO subfamily.

Its subcellular location is the endoplasmic reticulum membrane. Its pathway is glycolipid biosynthesis; glycosylphosphatidylinositol-anchor biosynthesis. Involved in glycosylphosphatidylinositol-anchor biosynthesis. Transfers ethanolamine phosphate to the GPI third mannose which links the GPI-anchor to the C-terminus of the proteins by an amide bond. Involved in cell wall biosynthesis. The chain is GPI ethanolamine phosphate transferase 3 (GPI13) from Eremothecium gossypii (strain ATCC 10895 / CBS 109.51 / FGSC 9923 / NRRL Y-1056) (Yeast).